The primary structure comprises 365 residues: MTNQAEEKRILIMAGGTGGHVFPALAVAKYLSQQGWKVRWLGTAERMEARLVPQHGFDIDFIDIKGVRGNGLMRKLAAPFKILRSVMQARAVIKSFKPDVVMGMGGFASGPGGVAAKLSGIPLVLHEQNAIPGMTNRLLSRIASEVLCAFEGTFTDIKAETVGNPIRKELIALGDKRESCCDDDSLKVLVVGGSLGAKIFNDVMPSVLEGVSKTHSMTVWHQVGRDNLVAVKAEYQRLGQDGSVSVAEFIDDMEAAYRWADVVVCRSGALTVSELAAVGLPSLLVPYPHAVDDHQTKNAKVLVNAGAAFLLPQPIVDTSKLMTKLSMLASDKQELCNMGQRARDVAILDATERVANVCIRLAEKG.

UDP-N-acetyl-alpha-D-glucosamine contacts are provided by residues 17 to 19, N129, R167, S194, I250, 269 to 274, and Q295; these read TGG and ALTVSE.

It belongs to the glycosyltransferase 28 family. MurG subfamily.

The protein localises to the cell inner membrane. The enzyme catalyses di-trans,octa-cis-undecaprenyl diphospho-N-acetyl-alpha-D-muramoyl-L-alanyl-D-glutamyl-meso-2,6-diaminopimeloyl-D-alanyl-D-alanine + UDP-N-acetyl-alpha-D-glucosamine = di-trans,octa-cis-undecaprenyl diphospho-[N-acetyl-alpha-D-glucosaminyl-(1-&gt;4)]-N-acetyl-alpha-D-muramoyl-L-alanyl-D-glutamyl-meso-2,6-diaminopimeloyl-D-alanyl-D-alanine + UDP + H(+). The protein operates within cell wall biogenesis; peptidoglycan biosynthesis. In terms of biological role, cell wall formation. Catalyzes the transfer of a GlcNAc subunit on undecaprenyl-pyrophosphoryl-MurNAc-pentapeptide (lipid intermediate I) to form undecaprenyl-pyrophosphoryl-MurNAc-(pentapeptide)GlcNAc (lipid intermediate II). The protein is UDP-N-acetylglucosamine--N-acetylmuramyl-(pentapeptide) pyrophosphoryl-undecaprenol N-acetylglucosamine transferase of Shewanella pealeana (strain ATCC 700345 / ANG-SQ1).